The primary structure comprises 396 residues: Apurinic-apyrimidinic endonuclease (396 aa).

The segment covering Lys-31–Gln-41 has biased composition (basic residues). A disordered region spans residues Lys-31 to Lys-100. Over residues Asn-55–Asn-70 the composition is skewed to polar residues. The span at Ser-72 to Pro-85 shows a compositional bias: basic and acidic residues. Residues His-185, His-225, Glu-261, Asp-295, His-298, His-332, Asp-345, His-347, and Glu-377 each contribute to the Zn(2+) site.

The protein belongs to the AP endonuclease 2 family. Requires Zn(2+) as cofactor.

It localises to the nucleus. In Caenorhabditis elegans, this protein is Apurinic-apyrimidinic endonuclease (apn-1).